The primary structure comprises 110 residues: UPF0060 membrane protein Pfl01_4105 (110 aa).

Transmembrane regions (helical) follow at residues 5 to 25 (LWFF…WMWL), 28 to 48 (GKSA…ALLL), 59 to 79 (AYAA…AVVE), and 84 to 104 (LGSD…ILFG).

The protein belongs to the UPF0060 family.

The protein resides in the cell inner membrane. This chain is UPF0060 membrane protein Pfl01_4105, found in Pseudomonas fluorescens (strain Pf0-1).